We begin with the raw amino-acid sequence, 612 residues long: Dihydroxy-acid dehydratase (612 aa).

A Mg(2+)-binding site is contributed by Asp81. Cys122 provides a ligand contact to [2Fe-2S] cluster. Asp123 and Lys124 together coordinate Mg(2+). At Lys124 the chain carries N6-carboxylysine. Cys193 is a binding site for [2Fe-2S] cluster. Residue Glu489 coordinates Mg(2+). The Proton acceptor role is filled by Ser515.

It belongs to the IlvD/Edd family. Homodimer. [2Fe-2S] cluster serves as cofactor. Requires Mg(2+) as cofactor.

The catalysed reaction is (2R)-2,3-dihydroxy-3-methylbutanoate = 3-methyl-2-oxobutanoate + H2O. The enzyme catalyses (2R,3R)-2,3-dihydroxy-3-methylpentanoate = (S)-3-methyl-2-oxopentanoate + H2O. It participates in amino-acid biosynthesis; L-isoleucine biosynthesis; L-isoleucine from 2-oxobutanoate: step 3/4. The protein operates within amino-acid biosynthesis; L-valine biosynthesis; L-valine from pyruvate: step 3/4. In terms of biological role, functions in the biosynthesis of branched-chain amino acids. Catalyzes the dehydration of (2R,3R)-2,3-dihydroxy-3-methylpentanoate (2,3-dihydroxy-3-methylvalerate) into 2-oxo-3-methylpentanoate (2-oxo-3-methylvalerate) and of (2R)-2,3-dihydroxy-3-methylbutanoate (2,3-dihydroxyisovalerate) into 2-oxo-3-methylbutanoate (2-oxoisovalerate), the penultimate precursor to L-isoleucine and L-valine, respectively. This Xanthomonas euvesicatoria pv. vesicatoria (strain 85-10) (Xanthomonas campestris pv. vesicatoria) protein is Dihydroxy-acid dehydratase.